We begin with the raw amino-acid sequence, 270 residues long: uncharacterized protein (270 aa).

Positions 166-186 (RRKENNISNESVSEEPESPLF) are disordered.

This is an uncharacterized protein from Ostreid herpesvirus 1 (isolate France) (OsHV-1).